Reading from the N-terminus, the 951-residue chain is Cation channel sperm-associated auxiliary subunit epsilon (951 aa).

Residues 1-19 (MSAREVAVLLLWLSCYGSA) form the signal peptide. Residues 20–903 (LWRYSTNSPN…ETFGLIPSPS (884 aa)) lie on the Extracellular side of the membrane. 4 cysteine pairs are disulfide-bonded: C57–C71, C101–C206, C246–C336, and C410–C413. N-linked (GlcNAc...) asparagine glycosylation is found at N61 and N114. N-linked (GlcNAc...) asparagine glycosylation is found at N414, N472, N487, N493, and N535. 4 cysteine pairs are disulfide-bonded: C583-C690, C703-C885, C719-C752, and C804-C835. N-linked (GlcNAc...) asparagine glycosylation is present at N796. Residues N854, N881, and N886 are each glycosylated (N-linked (GlcNAc...) asparagine). Residues 904–924 (VYLVASFLFVLMLLFFTILVL) traverse the membrane as a helical segment. The Cytoplasmic segment spans residues 925 to 951 (SYFRYMRIYRRYIYEPLHKPQRKRKKN).

This sequence belongs to the CATSPERD family. As to quaternary structure, component of the CatSper complex or CatSpermasome composed of the core pore-forming members CATSPER1, CATSPER2, CATSPER3 and CATSPER4 as well as auxiliary members CATSPERB, CATSPERG, CATSPERD, CATSPERE, CATSPERZ, C2CD6/CATSPERT, TMEM249, TMEM262 and EFCAB9. HSPA1 may be an additional auxiliary complex member. The core complex members CATSPER1, CATSPER2, CATSPER3 and CATSPER4 form a heterotetrameric channel. The auxiliary CATSPERB, CATSPERG, CATSPERD and CATSPERE subunits form a pavilion-like structure over the pore which stabilizes the complex through interactions with CATSPER4, CATSPER3, CATSPER1 and CATSPER2 respectively. TMEM262/CATSPERH interacts with CATSPERB, further stabilizing the complex. C2CD6/CATSPERT interacts at least with CATSPERD and is required for targeting the CatSper complex in the flagellar membrane.

Its subcellular location is the cell projection. It localises to the cilium. The protein resides in the flagellum membrane. Functionally, auxiliary component of the CatSper complex, a complex involved in sperm cell hyperactivation. Sperm cell hyperactivation is needed for sperm motility which is essential late in the preparation of sperm for fertilization. The chain is Cation channel sperm-associated auxiliary subunit epsilon from Homo sapiens (Human).